We begin with the raw amino-acid sequence, 151 residues long: Globin CTT-IIIA (151 aa).

In terms of domain architecture, Globin spans 8-147 (SMTDAQVAAV…MFHVIFNALD (140 aa)). His-98 contributes to the heme b binding site.

It belongs to the globin family. Monomer.

The protein is Globin CTT-IIIA of Chironomus thummi thummi (Midge).